Reading from the N-terminus, the 98-residue chain is MYYVIFAQDIPNTLEKRLAVREQHLARLKQLQAENRLLTAGPNPAIDDENPSEAGFTGSTVIAQFENLQAAKDWAAQDPYVEAGVYADVIVKPFKKVF.

The protein belongs to the YciI family. Homodimer.

This is an uncharacterized protein from Haemophilus influenzae (strain ATCC 51907 / DSM 11121 / KW20 / Rd).